The sequence spans 238 residues: Tyrosine recombinase XerD-like (238 aa).

One can recognise a Core-binding (CB) domain in the interval 1–75 (MKLPNEIDEY…SANQYLLFLY (75 aa)). Positions 90–238 (VQKKSQTAQS…TITTLEKYYR (149 aa)) constitute a Tyr recombinase domain. Catalysis depends on residues Lys154 and Arg204. Tyr236 functions as the O-(3'-phospho-DNA)-tyrosine intermediate in the catalytic mechanism.

The protein belongs to the 'phage' integrase family. XerD-like subfamily.

The protein localises to the cytoplasm. In terms of biological role, putative tyrosine recombinase. Not involved in the cutting and rejoining of the recombining DNA molecules on dif(SL) site. This chain is Tyrosine recombinase XerD-like (ynbA), found in Lactococcus lactis subsp. lactis (strain IL1403) (Streptococcus lactis).